Consider the following 259-residue polypeptide: MGNRKDHYYNKSKQEGYRSRAAYKLQQLDDRFDVLFGGASVVDLGAAPGGWLQVAAERAGARGKVVGVDFQSITQFETDAGLETVRGDMTEDETRQRVRDAANGSADVVVSDMAPDMTGEYDLDHARSVHLARQALETARELLDAGGHFVVKVFDGRDFQDLLADIEDEFAFVATHSPDASRDASSELYVVGKNHIVAPIAEGDEHTVEIVDTGDEGDGIARIEGYTLFVDDAAEGDTVDVTVTDLKPNYGFAERRDGA.

Positions 49, 51, 69, 88, and 112 each coordinate S-adenosyl-L-methionine. K152 functions as the Proton acceptor in the catalytic mechanism. One can recognise a TRAM domain in the interval P199–D257.

Belongs to the class I-like SAM-binding methyltransferase superfamily. RNA methyltransferase RlmE family.

Its subcellular location is the cytoplasm. The catalysed reaction is uridine(2552) in 23S rRNA + S-adenosyl-L-methionine = 2'-O-methyluridine(2552) in 23S rRNA + S-adenosyl-L-homocysteine + H(+). In terms of biological role, specifically methylates the uridine in position 2552 of 23S rRNA at the 2'-O position of the ribose in the fully assembled 50S ribosomal subunit. The sequence is that of Ribosomal RNA large subunit methyltransferase E from Halobacterium salinarum (strain ATCC 29341 / DSM 671 / R1).